The primary structure comprises 708 residues: B-cell lymphoma 6 protein homolog (708 aa).

Residues 32 to 99 (TDVVIIVNRE…MYTSRLNLRE (68 aa)) enclose the BTB domain. Basic and acidic residues predominate over residues 303–317 (AKEEERTSSEDEISQ). Disordered stretches follow at residues 303–371 (AKEE…KSPT) and 431–470 (PTKM…QSPL). 2 stretches are compositionally biased toward polar residues: residues 333–370 (SPQS…TKSP) and 431–454 (PTKM…NIVN). C2H2-type zinc fingers lie at residues 520–543 (FFCN…LQVH), 548–570 (YKCD…KTVH), 576–598 (YRCN…TRIH), 604–626 (YKCE…VLIH), 632–654 (YPCE…LRIH), and 660–683 (YHCE…RQKH).

It localises to the nucleus. Its function is as follows. Transcriptional repressor mainly required for germinal center (GC) formation and antibody affinity maturation which has different mechanisms of action specific to the lineage and biological functions. Forms complexes with different corepressors and histone deacetylases to repress the transcriptional expression of different subsets of target genes. Represses its target genes by binding directly to the DNA sequence 5'-TTCCTAGAA-3' (BCL6-binding site) or indirectly by repressing the transcriptional activity of transcription factors. In GC B-cells, represses genes that function in differentiation, inflammation, apoptosis and cell cycle control, also autoregulates its transcriptional expression and up-regulates, indirectly, the expression of some genes important for GC reactions, such as AICDA, through the repression of microRNAs expression. An important function is to allow GC B-cells to proliferate very rapidly in response to T-cell dependent antigens and tolerate the physiological DNA breaks required for immunglobulin class switch recombination and somatic hypermutation without inducing a p53/TP53-dependent apoptotic response. In follicular helper CD4(+) T-cells (T(FH) cells), promotes the expression of T(FH)-related genes but inhibits the differentiation of T(H)1, T(H)2 and T(H)17 cells. Also required for the establishment and maintenance of immunological memory for both T- and B-cells. Suppresses macrophage proliferation through competition with STAT5 for STAT-binding motifs binding on certain target genes, such as CCL2 and CCND2. In response to genotoxic stress, controls cell cycle arrest in GC B-cells in both p53/TP53-dependedent and -independent manners. Besides, also controls neurogenesis through the alteration of the composition of NOTCH-dependent transcriptional complexes at selective NOTCH targets, such as HES5, including the recruitment of the deacetylase SIRT1 and resulting in an epigenetic silencing leading to neuronal differentiation. In Gallus gallus (Chicken), this protein is B-cell lymphoma 6 protein homolog.